We begin with the raw amino-acid sequence, 66 residues long: MANKMKTRKSAKKRYSFTVNGKVKYKKQNLRHILTKKSSKRKRNLRKSGNLSCFEVKRIKTLLPYG.

The protein belongs to the bacterial ribosomal protein bL35 family.

The protein is Large ribosomal subunit protein bL35 of Borreliella burgdorferi (strain ATCC 35210 / DSM 4680 / CIP 102532 / B31) (Borrelia burgdorferi).